We begin with the raw amino-acid sequence, 247 residues long: Small ribosomal subunit protein uS3 (247 aa).

The KH type-2 domain maps to 18-87; the sequence is IDEYLAKRFY…NPQITVRRVE (70 aa). Residues 226–247 are disordered; that stretch reads QQGEVVGEAPNTPLEEQGQKQG.

Belongs to the universal ribosomal protein uS3 family. Part of the 30S ribosomal subunit.

In terms of biological role, binds the lower part of the 30S subunit head. The protein is Small ribosomal subunit protein uS3 of Hyperthermus butylicus (strain DSM 5456 / JCM 9403 / PLM1-5).